Reading from the N-terminus, the 206-residue chain is Ribosomal RNA large subunit methyltransferase E (206 aa).

Positions 60, 62, 80, 96, and 121 each coordinate S-adenosyl-L-methionine. The active-site Proton acceptor is the Lys-161.

This sequence belongs to the class I-like SAM-binding methyltransferase superfamily. RNA methyltransferase RlmE family.

The protein resides in the cytoplasm. It carries out the reaction uridine(2552) in 23S rRNA + S-adenosyl-L-methionine = 2'-O-methyluridine(2552) in 23S rRNA + S-adenosyl-L-homocysteine + H(+). Specifically methylates the uridine in position 2552 of 23S rRNA at the 2'-O position of the ribose in the fully assembled 50S ribosomal subunit. This chain is Ribosomal RNA large subunit methyltransferase E, found in Francisella tularensis subsp. holarctica (strain FTNF002-00 / FTA).